The following is a 421-amino-acid chain: MTHILDDLSFRGLIQQQTDEAGLRELLDKEKISLYSGFDPTADSLHIGHLLPILMLRRFQLAGHRPIALVGGATGLIGDPSGKKAERTLNNEEIVREWSQKIKNQLSRFLDFEAEENPAIMANNYDWIGKMNVIDFLRDVGKNFGINYMLAKDTVSSRIETGISYTEFSYMILQSLDFLNLYRNQECKLQIGGSDQWGNITSGLELIRKSEENAKAFGLTIPLVTKADGTKFGKTEGGAIWLDKEKTSAYEFYQFWINTDDRDVVKYLKYFTFLSKEEIEDLAEKTETAPEKREAQKRLAEEVTVLVHGREAFEQAVNISKALFSGDIKQLTAEEVKVGFKGVPSLEVEKADELPLVEILVQSKLSPSKRQAREDITNGAVYVNGERRTDVADVLTADDRIEGQFTVIRRGKKKYFLLTYK.

Tyr35 contacts L-tyrosine. The 'HIGH' region signature appears at 40–49 (PTADSLHIGH). Residues Tyr170 and Gln174 each contribute to the L-tyrosine site. Residues 231-235 (KFGKT) carry the 'KMSKS' region motif. Lys234 contributes to the ATP binding site. In terms of domain architecture, S4 RNA-binding spans 354–420 (LPLVEILVQS…GKKKYFLLTY (67 aa)).

This sequence belongs to the class-I aminoacyl-tRNA synthetase family. TyrS type 1 subfamily. In terms of assembly, homodimer.

It localises to the cytoplasm. The enzyme catalyses tRNA(Tyr) + L-tyrosine + ATP = L-tyrosyl-tRNA(Tyr) + AMP + diphosphate + H(+). Functionally, catalyzes the attachment of tyrosine to tRNA(Tyr) in a two-step reaction: tyrosine is first activated by ATP to form Tyr-AMP and then transferred to the acceptor end of tRNA(Tyr). In Bacillus licheniformis (strain ATCC 14580 / DSM 13 / JCM 2505 / CCUG 7422 / NBRC 12200 / NCIMB 9375 / NCTC 10341 / NRRL NRS-1264 / Gibson 46), this protein is Tyrosine--tRNA ligase 1.